The primary structure comprises 67 residues: Large ribosomal subunit protein uL29 (67 aa).

Belongs to the universal ribosomal protein uL29 family.

The protein is Large ribosomal subunit protein uL29 of Desulfitobacterium hafniense (strain DSM 10664 / DCB-2).